Here is a 367-residue protein sequence, read N- to C-terminus: Peptide chain release factor 2 (367 aa).

Gln-250 carries the N5-methylglutamine modification.

The protein belongs to the prokaryotic/mitochondrial release factor family. Methylated by PrmC. Methylation increases the termination efficiency of RF2.

Its subcellular location is the cytoplasm. Its function is as follows. Peptide chain release factor 2 directs the termination of translation in response to the peptide chain termination codons UGA and UAA. The chain is Peptide chain release factor 2 from Kineococcus radiotolerans (strain ATCC BAA-149 / DSM 14245 / SRS30216).